Consider the following 87-residue polypeptide: Probable Fe(2+)-trafficking protein (87 aa).

Belongs to the Fe(2+)-trafficking protein family.

Functionally, could be a mediator in iron transactions between iron acquisition and iron-requiring processes, such as synthesis and/or repair of Fe-S clusters in biosynthetic enzymes. This is Probable Fe(2+)-trafficking protein from Francisella tularensis subsp. novicida (strain U112).